The following is a 493-amino-acid chain: Galactose-1-phosphate uridylyltransferase (493 aa).

This sequence belongs to the galactose-1-phosphate uridylyltransferase type 2 family.

It localises to the cytoplasm. The catalysed reaction is alpha-D-galactose 1-phosphate + UDP-alpha-D-glucose = alpha-D-glucose 1-phosphate + UDP-alpha-D-galactose. It functions in the pathway carbohydrate metabolism; galactose metabolism. The sequence is that of Galactose-1-phosphate uridylyltransferase from Streptococcus pneumoniae (strain CGSP14).